The chain runs to 323 residues: ADP-L-glycero-D-manno-heptose-6-epimerase (323 aa).

Residues 10–11, 31–32, K38, R53, 75–79, and N92 contribute to the NADP(+) site; these read FI, DN, and MGACS. Y143 serves as the catalytic Proton acceptor. An NADP(+)-binding site is contributed by K147. Substrate is bound at residue N170. NADP(+)-binding residues include V171 and K179. K179 functions as the Proton acceptor in the catalytic mechanism. Substrate is bound by residues D181, K188, 202 to 205, R216, and Y281; that span reads FRSC.

The protein belongs to the NAD(P)-dependent epimerase/dehydratase family. HldD subfamily. As to quaternary structure, homopentamer. Requires NADP(+) as cofactor.

It catalyses the reaction ADP-D-glycero-beta-D-manno-heptose = ADP-L-glycero-beta-D-manno-heptose. It participates in nucleotide-sugar biosynthesis; ADP-L-glycero-beta-D-manno-heptose biosynthesis; ADP-L-glycero-beta-D-manno-heptose from D-glycero-beta-D-manno-heptose 7-phosphate: step 4/4. Catalyzes the interconversion between ADP-D-glycero-beta-D-manno-heptose and ADP-L-glycero-beta-D-manno-heptose via an epimerization at carbon 6 of the heptose. This Nitratidesulfovibrio vulgaris (strain ATCC 29579 / DSM 644 / CCUG 34227 / NCIMB 8303 / VKM B-1760 / Hildenborough) (Desulfovibrio vulgaris) protein is ADP-L-glycero-D-manno-heptose-6-epimerase.